The chain runs to 63 residues: Large ribosomal subunit protein bL28 (63 aa).

It belongs to the bacterial ribosomal protein bL28 family.

This is Large ribosomal subunit protein bL28 from Syntrophotalea carbinolica (strain DSM 2380 / NBRC 103641 / GraBd1) (Pelobacter carbinolicus).